A 369-amino-acid polypeptide reads, in one-letter code: Peptide chain release factor 2 (369 aa).

Residue Gln-251 is modified to N5-methylglutamine.

Belongs to the prokaryotic/mitochondrial release factor family. In terms of processing, methylated by PrmC. Methylation increases the termination efficiency of RF2.

It localises to the cytoplasm. Functionally, peptide chain release factor 2 directs the termination of translation in response to the peptide chain termination codons UGA and UAA. The chain is Peptide chain release factor 2 (prfB) from Thermotoga maritima (strain ATCC 43589 / DSM 3109 / JCM 10099 / NBRC 100826 / MSB8).